The sequence spans 502 residues: Glutamate--tRNA ligase (502 aa).

A 'HIGH' region motif is present at residues 12–22 (PSPTGYLHVGG). A 'KMSKS' region motif is present at residues 259-263 (KLSKR). Residue Lys-262 participates in ATP binding.

The protein belongs to the class-I aminoacyl-tRNA synthetase family. Glutamate--tRNA ligase type 1 subfamily. Monomer.

The protein localises to the cytoplasm. It carries out the reaction tRNA(Glu) + L-glutamate + ATP = L-glutamyl-tRNA(Glu) + AMP + diphosphate. Catalyzes the attachment of glutamate to tRNA(Glu) in a two-step reaction: glutamate is first activated by ATP to form Glu-AMP and then transferred to the acceptor end of tRNA(Glu). The polypeptide is Glutamate--tRNA ligase (Chlorobium phaeobacteroides (strain DSM 266 / SMG 266 / 2430)).